A 608-amino-acid chain; its full sequence is Afamin (608 aa).

The first 21 residues, 1-21, serve as a signal peptide directing secretion; sequence MRHLKLTGFIFFLLPLTESLA. Albumin domains follow at residues 22-210, 211-403, and 404-599; these read LPTK…APIT, QYLK…KFNE, and TTQR…KTGD. The N-linked (GlcNAc...) asparagine glycan is linked to Asn-33. 11 disulfides stabilise this stretch: Cys-77–Cys-86, Cys-99–Cys-114, Cys-113–Cys-124, Cys-148–Cys-193, Cys-192–Cys-201, Cys-224–Cys-270, Cys-269–Cys-277, Cys-289–Cys-303, Cys-302–Cys-313, Cys-340–Cys-385, and Cys-384–Cys-393. Asn-109 carries an N-linked (GlcNAc...) asparagine glycan. The N-linked (GlcNAc...) asparagine glycan is linked to Asn-153. The binding pocket for hydrophobic ligands stretch occupies residues 215 to 319; it reads ASSSYQRNVC…REACIINANK (105 aa). Asn-402 carries N-linked (GlcNAc...) asparagine glycosylation. Disulfide bonds link Cys-416–Cys-462, Cys-461–Cys-470, Cys-483–Cys-499, Cys-498–Cys-509, and Cys-580–Cys-589. Asn-488 is a glycosylation site (N-linked (GlcNAc...) asparagine). Residues 583–608 form a disordered region; sequence VQEPESCFSPESSKTGDESQATEKQR. Residues 596–608 show a composition bias toward basic and acidic residues; sequence KTGDESQATEKQR.

The protein belongs to the ALB/AFP/VDB family. Forms a 1:1 complex with Wnt family members; interacts with WNT1, WNT2B, WNT3, WNT5A, WNT7A, WNT7B, WNT8, WNT9A, WNT9B, WNT10A and WNT10B. Interacts with WNT3A. Post-translationally, N-glycosylated; more than 90% of the glycans are sialylated. In terms of tissue distribution, detected in brain, especially on brain capillaries (at protein level). Expressed in isolated brain capillaries.

Its subcellular location is the secreted. Functionally, functions as a carrier for hydrophobic molecules in body fluids. Essential for the solubility and activity of lipidated Wnt family members, including WNT1, WNT2B, WNT3, WNT3A, WNT5A, WNT7A, WNT7B, WNT8, WNT9A, WNT9B, WNT10A and WNT10B. Binds vitamin E. May transport vitamin E in body fluids under conditions where the lipoprotein system is not sufficient. May be involved in the transport of vitamin E across the blood-brain barrier. In Mus musculus (Mouse), this protein is Afamin (Afm).